Here is a 135-residue protein sequence, read N- to C-terminus: T-cell receptor beta chain V region 3H.25 (135 aa).

The N-terminal stretch at 1–20 (MATRLLCYTVLCLLGARILN) is a signal peptide. Positions 21-115 (SKVIQTPRYL…SALYLCASSL (95 aa)) are v segment. Cys-42 and Cys-111 form a disulfide bridge. The segment at 116 to 118 (FGT) is d segment. The interval 119 to 135 (SDYTFGSGTRLLVIGKA) is j segment.

In Mus musculus (Mouse), this protein is T-cell receptor beta chain V region 3H.25.